The primary structure comprises 364 residues: Long-wave-sensitive opsin 1 (364 aa).

Over 1–52 the chain is Extracellular; it reads MAQRWGPQKLAGGQPQAGFEDSTQASIFTYTNNNATRDPFEGPNYHIAPRWV. O-linked (GlcNAc) serine glycosylation occurs at S22. Residue N34 is glycosylated (N-linked (GlcNAc...) asparagine). The helical transmembrane segment at 53–77 threads the bilayer; sequence YHVTSAWMIFVVIASVFTNGLVLAA. At 78-89 the chain is on the cytoplasmic side; it reads TMRFKKLRHPLN. Residues 90–115 traverse the membrane as a helical segment; the sequence is WILVNLAVADLAETIIASTISVVNQI. Topologically, residues 116–129 are extracellular; it reads YGYFVLGHPMCVVE. C126 and C203 form a disulfide bridge. A helical transmembrane segment spans residues 130–149; that stretch reads GYTVSLCGITGLWSLAIISW. Topologically, residues 150–168 are cytoplasmic; that stretch reads ERWMVVCKPFGNVRFDAKL. A helical membrane pass occupies residues 169–192; it reads AVAGIAFSWIWAAVWTAPPIFGWS. Residues 193–218 lie on the Extracellular side of the membrane; sequence RYWPHGLKTSCGPDVFSGSSYPGVQS. The chain crosses the membrane as a helical span at residues 219 to 246; sequence YMIVLMITCCIIPLSVIVLCYLQVWLAI. Topologically, residues 247 to 268 are cytoplasmic; that stretch reads RAVAKQQKESESTQKAEKEVTR. Residues 269-292 form a helical membrane-spanning segment; sequence MVMVMVFAFCLCWGPYTFFACFAA. Residues 293 to 300 lie on the Extracellular side of the membrane; the sequence is AHPGYAFH. Residues 301-325 form a helical membrane-spanning segment; sequence PLVAALPAYFAKSATIYNPIIYVFM. At K312 the chain carries N6-(retinylidene)lysine. The Cytoplasmic segment spans residues 326–364; it reads NRQFRNCILQLFGKKVDDSSELSSVSKTEASSVSSVSPA.

The protein belongs to the G-protein coupled receptor 1 family. Opsin subfamily. Post-translationally, phosphorylated on some or all of the serine and threonine residues present in the C-terminal region. The three color pigments are found in the cone photoreceptor cells. Expressed in retina.

It is found in the membrane. Functionally, visual pigments are the light-absorbing molecules that mediate vision. They consist of an apoprotein, opsin, covalently linked to cis-retinal. This Equus caballus (Horse) protein is Long-wave-sensitive opsin 1 (OPN1LW).